A 307-amino-acid polypeptide reads, in one-letter code: Olfactory receptor 13G1 (307 aa).

The Extracellular portion of the chain corresponds to 1 to 22 (MNHSVVTEFIILGLTKKPELQG). An N-linked (GlcNAc...) asparagine glycan is attached at N2. A helical transmembrane segment spans residues 23-43 (IIFLFFLIVYLVAFLGNMLII). At 44–51 (IAKIYNNT) the chain is on the cytoplasmic side. A helical transmembrane segment spans residues 52 to 72 (LHTPMYVFLLTLAVVDIICTT). Over 73–96 (SIIPKMLGTMLTSENTISYAGCMS) the chain is Extracellular. C94 and C186 are joined by a disulfide. The helical transmembrane segment at 97–117 (QLFLFTWSLGAEMVLFTTMAY) threads the bilayer. Residues 118 to 136 (DRYVAICFPLHYSTIMNHH) lie on the Cytoplasmic side of the membrane. The chain crosses the membrane as a helical span at residues 137–157 (MCVALLSMVMAIAVTNSWVHT). The Extracellular portion of the chain corresponds to 158 to 194 (ALIMRLTFCGPNTIDHFFCEIPPLLALSCSPVRINEV). Residues 195–214 (MVYVADITLAIGDFILTCIS) form a helical membrane-spanning segment. The Cytoplasmic portion of the chain corresponds to 215–234 (YGFIIVAILRIRTVEGKRKA). The helical transmembrane segment at 235–255 (FSTCSSHLTVVTLYYSPVIYT) threads the bilayer. The Extracellular portion of the chain corresponds to 256–268 (YIRPASSYTFERD). The helical transmembrane segment at 269–289 (KVVAALYTLVTPTLNPMVYSF) threads the bilayer. Residues 290–307 (QNREMQAGIRKVFAFLKH) lie on the Cytoplasmic side of the membrane.

This sequence belongs to the G-protein coupled receptor 1 family.

The protein resides in the cell membrane. Odorant receptor. In Homo sapiens (Human), this protein is Olfactory receptor 13G1 (OR13G1).